The chain runs to 353 residues: Protein CEPU-1 (353 aa).

A signal peptide spans 1-28 (MAQAKMQHPVSWVIFAGMAALLLFQGVP). Ig-like C2-type domains follow at residues 37 to 124 (PKAM…PKTS), 134 to 216 (PKIT…VKVT), and 220 to 314 (PPYI…ETTT). 3 N-linked (GlcNAc...) asparagine glycosylation sites follow: asparagine 42, asparagine 68, and asparagine 150. A disulfide bond links cysteine 55 and cysteine 113. Disulfide bonds link cysteine 155/cysteine 199 and cysteine 241/cysteine 293. Residues asparagine 282, asparagine 290, and asparagine 303 are each glycosylated (N-linked (GlcNAc...) asparagine). Serine 330 carries the GPI-anchor amidated serine lipid modification. The propeptide at 331 to 353 (GAWRRGSCAWLLALPLAQLARQF) is removed in mature form.

Belongs to the immunoglobulin superfamily. IgLON family. As to quaternary structure, interacts with NEGR1. Found on the dendrites, somata and axons of developing Purkinje cells. Undetectable on other neurons like Golgi or granule cells.

The protein localises to the cell membrane. In terms of biological role, it may be a cellular address molecule specific to Purkinje cells. It may represent a receptor or a subunit of a receptor complex. The polypeptide is Protein CEPU-1 (Gallus gallus (Chicken)).